A 155-amino-acid chain; its full sequence is Ribosomal RNA large subunit methyltransferase H (155 aa).

S-adenosyl-L-methionine contacts are provided by residues leucine 72, glycine 103, and 122–127; that span reads LSPLTL.

It belongs to the RNA methyltransferase RlmH family. As to quaternary structure, homodimer.

The protein localises to the cytoplasm. The enzyme catalyses pseudouridine(1915) in 23S rRNA + S-adenosyl-L-methionine = N(3)-methylpseudouridine(1915) in 23S rRNA + S-adenosyl-L-homocysteine + H(+). Functionally, specifically methylates the pseudouridine at position 1915 (m3Psi1915) in 23S rRNA. The polypeptide is Ribosomal RNA large subunit methyltransferase H (Haemophilus influenzae (strain PittGG)).